The following is a 182-amino-acid chain: dCTP deaminase, dUMP-forming (182 aa).

DCTP contacts are provided by residues 96–101 (RSSIGR), D113, 121–123 (TLE), Q142, Y156, and Q163. Catalysis depends on E123, which acts as the Proton donor/acceptor.

This sequence belongs to the dCTP deaminase family. In terms of assembly, homotrimer.

The catalysed reaction is dCTP + 2 H2O = dUMP + NH4(+) + diphosphate. Its pathway is pyrimidine metabolism; dUMP biosynthesis; dUMP from dCTP: step 1/1. Functionally, bifunctional enzyme that catalyzes both the deamination of dCTP to dUTP and the hydrolysis of dUTP to dUMP without releasing the toxic dUTP intermediate. This Halothermothrix orenii (strain H 168 / OCM 544 / DSM 9562) protein is dCTP deaminase, dUMP-forming.